A 542-amino-acid chain; its full sequence is MIMGGVRELLLVVMTVGVVKVSCYPVGKSQKQDQVSLQRRLGELSSNDVSIVHALALLRSIGSDAKQAREEYLETNEVESQASPNHGSSPANDALSSEEKLRRVSSDDAATSEAATGPSGDDATSEAATGPSGDDATSEAATGPSGDDATSEAATGPSGDDATSEAATGPSGDDATSEAATGPSGDDATSEAATGPSGDDATSEAATGPSGDDATSEAATGPSGDDATSEAATGPSGDDATSEAATGPSGDDATSEAATGPSGDDATSEAATGPSGDDATSEAATGPSGDDATSEAATGPSGDDATSEAATGPSGDDATSEAATGPSGDDATSEAATGPSGDDATSEAATGPSGDDATSEAATGPSGDDATSEAATGPSGDDATSEAATGPSGDDATSEAATGPSGDDATSEAATGPSGDDATSEAATGPSGDDATSEAATGPSGDDATSEAATGPSGDDATSEAATGPSGDDATSEAATGPSGDDATSEAATGPSGDDATSEAATGPSGDDATSEAATGPSGDDATSEAATGPSGDDAMDI.

Positions 1–21 are cleaved as a signal peptide; sequence MIMGGVRELLLVVMTVGVVKV. The propeptide occupies 22 to 120; it reads SCYPVGKSQK…TSEAATGPSG (99 aa). Residues 70–542 are disordered; sequence EEYLETNEVE…GPSGDDAMDI (473 aa). The span at 78–95 shows a compositional bias: polar residues; that stretch reads VESQASPNHGSSPANDAL. Residues 97-106 are compositionally biased toward basic and acidic residues; the sequence is SEEKLRRVSS. A compositionally biased stretch (low complexity) spans 107-116; that stretch reads DDAATSEAAT. 32 tandem repeats follow at residues 121-133, 134-146, 147-159, 160-172, 173-185, 186-198, 199-211, 212-224, 225-237, 238-250, 251-263, 264-276, 277-289, 290-302, 303-315, 316-328, 329-341, 342-354, 355-367, 368-380, 381-393, 394-406, 407-419, 420-432, 433-445, 446-458, 459-471, 472-484, 485-497, 498-510, 511-523, and 524-536. The tract at residues 121 to 536 is 32 X 13 AA tandem repeats of D-D-A-T-S-E-A-A-T-G-P-S-G; it reads DDATSEAATG…TSEAATGPSG (416 aa). T124 carries O-linked (GalNAc...) threonine glycosylation. O-linked (GalNAc...) serine glycosylation occurs at S125. O-linked (GalNAc...) threonine glycans are attached at residues T129 and T137. S138 carries an O-linked (GalNAc...) serine glycan. Residues T142 and T150 are each glycosylated (O-linked (GalNAc...) threonine). O-linked (GalNAc...) serine glycosylation occurs at S151. 2 O-linked (GalNAc...) threonine glycosylation sites follow: T155 and T163. Residue S164 is glycosylated (O-linked (GalNAc...) serine). O-linked (GalNAc...) threonine glycans are attached at residues T168 and T176. O-linked (GalNAc...) serine glycosylation occurs at S177. T181 and T189 each carry an O-linked (GalNAc...) threonine glycan. S190 carries an O-linked (GalNAc...) serine glycan. Residues T194 and T202 are each glycosylated (O-linked (GalNAc...) threonine). Residue S203 is glycosylated (O-linked (GalNAc...) serine). 2 O-linked (GalNAc...) threonine glycosylation sites follow: T207 and T215. S216 is a glycosylation site (O-linked (GalNAc...) serine). O-linked (GalNAc...) threonine glycosylation is found at T220 and T228. An O-linked (GalNAc...) serine glycan is attached at S229. O-linked (GalNAc...) threonine glycans are attached at residues T233 and T241. An O-linked (GalNAc...) serine glycan is attached at S242. T246 and T254 each carry an O-linked (GalNAc...) threonine glycan. S255 carries an O-linked (GalNAc...) serine glycan. O-linked (GalNAc...) threonine glycans are attached at residues T259 and T267. S268 carries an O-linked (GalNAc...) serine glycan. T272 and T280 each carry an O-linked (GalNAc...) threonine glycan. O-linked (GalNAc...) serine glycosylation occurs at S281. O-linked (GalNAc...) threonine glycosylation is found at T285 and T293. Residue S294 is glycosylated (O-linked (GalNAc...) serine). 2 O-linked (GalNAc...) threonine glycosylation sites follow: T298 and T306. A glycan (O-linked (GalNAc...) serine) is linked at S307. Residues T311 and T319 are each glycosylated (O-linked (GalNAc...) threonine). O-linked (GalNAc...) serine glycosylation occurs at S320. Residues T324 and T332 are each glycosylated (O-linked (GalNAc...) threonine). O-linked (GalNAc...) serine glycosylation is present at S333. O-linked (GalNAc...) threonine glycans are attached at residues T337 and T345. S346 carries an O-linked (GalNAc...) serine glycan. O-linked (GalNAc...) threonine glycans are attached at residues T350 and T358. S359 carries an O-linked (GalNAc...) serine glycan. Residues T363 and T371 are each glycosylated (O-linked (GalNAc...) threonine). S372 is a glycosylation site (O-linked (GalNAc...) serine). 2 O-linked (GalNAc...) threonine glycosylation sites follow: T376 and T384. An O-linked (GalNAc...) serine glycan is attached at S385. O-linked (GalNAc...) threonine glycosylation is found at T389 and T397. S398 is a glycosylation site (O-linked (GalNAc...) serine). O-linked (GalNAc...) threonine glycosylation is found at T402 and T410. Residue S411 is glycosylated (O-linked (GalNAc...) serine). O-linked (GalNAc...) threonine glycosylation is found at T415 and T423. An O-linked (GalNAc...) serine glycan is attached at S424. Residues T428 and T436 are each glycosylated (O-linked (GalNAc...) threonine). An O-linked (GalNAc...) serine glycan is attached at S437. T441 and T449 each carry an O-linked (GalNAc...) threonine glycan. S450 is a glycosylation site (O-linked (GalNAc...) serine). Residues T454 and T462 are each glycosylated (O-linked (GalNAc...) threonine). A glycan (O-linked (GalNAc...) serine) is linked at S463. O-linked (GalNAc...) threonine glycosylation is found at T467 and T475. Residue S476 is glycosylated (O-linked (GalNAc...) serine). Residues T480 and T488 are each glycosylated (O-linked (GalNAc...) threonine). The O-linked (GalNAc...) serine glycan is linked to S489. Residues T493 and T501 are each glycosylated (O-linked (GalNAc...) threonine). An O-linked (GalNAc...) serine glycan is attached at S502. T506 and T514 each carry an O-linked (GalNAc...) threonine glycan. O-linked (GalNAc...) serine glycosylation occurs at S515. 2 O-linked (GalNAc...) threonine glycosylation sites follow: T519 and T527. S528 carries an O-linked (GalNAc...) serine glycan. T532 carries O-linked (GalNAc...) threonine glycosylation. The propeptide occupies 537 to 542; that stretch reads DDAMDI.

Post-translationally, most sialic acid residues exist in the form of polysialyl groups partly capped with deaminoneuraminic acid. In terms of tissue distribution, cortical alveoli of immature ovaries.

In response to egg activation, PSGP is discharged by exocytosis into the perivitelline space, where it undergoes rapid proteolysis into glycotridecapeptides. During fertilization and/or early development the glycotridecapeptides prevent polyspermy or are involved in the formation of a fertilization membrane. The sequence is that of Polysialoglycoprotein from Oncorhynchus mykiss (Rainbow trout).